The chain runs to 485 residues: Protein nucleotidyltransferase YdiU (485 aa).

Positions 90, 92, 93, 113, 125, 126, 176, and 183 each coordinate ATP. The Proton acceptor role is filled by D252. Mg(2+) is bound by residues N253 and D262. D262 contributes to the ATP binding site.

This sequence belongs to the SELO family. Mg(2+) serves as cofactor. Mn(2+) is required as a cofactor.

The enzyme catalyses L-seryl-[protein] + ATP = 3-O-(5'-adenylyl)-L-seryl-[protein] + diphosphate. It carries out the reaction L-threonyl-[protein] + ATP = 3-O-(5'-adenylyl)-L-threonyl-[protein] + diphosphate. The catalysed reaction is L-tyrosyl-[protein] + ATP = O-(5'-adenylyl)-L-tyrosyl-[protein] + diphosphate. It catalyses the reaction L-histidyl-[protein] + UTP = N(tele)-(5'-uridylyl)-L-histidyl-[protein] + diphosphate. The enzyme catalyses L-seryl-[protein] + UTP = O-(5'-uridylyl)-L-seryl-[protein] + diphosphate. It carries out the reaction L-tyrosyl-[protein] + UTP = O-(5'-uridylyl)-L-tyrosyl-[protein] + diphosphate. Its function is as follows. Nucleotidyltransferase involved in the post-translational modification of proteins. It can catalyze the addition of adenosine monophosphate (AMP) or uridine monophosphate (UMP) to a protein, resulting in modifications known as AMPylation and UMPylation. The sequence is that of Protein nucleotidyltransferase YdiU from Aliivibrio salmonicida (strain LFI1238) (Vibrio salmonicida (strain LFI1238)).